A 724-amino-acid chain; its full sequence is Ribosomal RNA large subunit methyltransferase K/L (724 aa).

One can recognise a THUMP domain in the interval 42 to 153 (DAQRLVLWSR…KGRATLSVDL (112 aa)).

This sequence belongs to the methyltransferase superfamily. RlmKL family.

Its subcellular location is the cytoplasm. It carries out the reaction guanosine(2445) in 23S rRNA + S-adenosyl-L-methionine = N(2)-methylguanosine(2445) in 23S rRNA + S-adenosyl-L-homocysteine + H(+). The catalysed reaction is guanosine(2069) in 23S rRNA + S-adenosyl-L-methionine = N(2)-methylguanosine(2069) in 23S rRNA + S-adenosyl-L-homocysteine + H(+). In terms of biological role, specifically methylates the guanine in position 2445 (m2G2445) and the guanine in position 2069 (m7G2069) of 23S rRNA. This chain is Ribosomal RNA large subunit methyltransferase K/L, found in Xylella fastidiosa (strain 9a5c).